Reading from the N-terminus, the 149-residue chain is Secreted RxLR effector protein 3 (149 aa).

The signal sequence occupies residues 1–23 (MRASTILFVLGAAILAVIGVTTA). The short motif at 38–53 (RLLRSGSMEQEPDEER) is the RxLR-dEER element.

The protein belongs to the RxLR effector family.

It localises to the secreted. The protein localises to the host nucleus. Its subcellular location is the host cytoplasm. In terms of biological role, secreted effector that completely suppresses the host cell death induced by cell death-inducing proteins. The chain is Secreted RxLR effector protein 3 from Plasmopara viticola (Downy mildew of grapevine).